The sequence spans 265 residues: Pyrroline-5-carboxylate reductase (265 aa).

It belongs to the pyrroline-5-carboxylate reductase family.

The protein localises to the cytoplasm. The enzyme catalyses L-proline + NADP(+) = (S)-1-pyrroline-5-carboxylate + NADPH + 2 H(+). It carries out the reaction L-proline + NAD(+) = (S)-1-pyrroline-5-carboxylate + NADH + 2 H(+). It participates in amino-acid biosynthesis; L-proline biosynthesis; L-proline from L-glutamate 5-semialdehyde: step 1/1. Catalyzes the reduction of 1-pyrroline-5-carboxylate (PCA) to L-proline. The sequence is that of Pyrroline-5-carboxylate reductase from Aquifex aeolicus (strain VF5).